We begin with the raw amino-acid sequence, 840 residues long: Phosphatidylglycerol lysyltransferase (840 aa).

Residues Met1 to Lys8 are Cytoplasmic-facing. The helical transmembrane segment at Leu9–Leu29 threads the bilayer. Residues Tyr30–Trp52 lie on the Extracellular side of the membrane. The helical transmembrane segment at Leu53–Ile73 threads the bilayer. Over Leu74 to Arg89 the chain is Cytoplasmic. The chain crosses the membrane as a helical span at residues Val90–Gly110. Topologically, residues Val111–Tyr129 are extracellular. The helical transmembrane segment at Ile130–Leu150 threads the bilayer. At Arg151–Glu161 the chain is on the cytoplasmic side. A helical membrane pass occupies residues Ile162 to Tyr182. Residues Thr183–Thr200 are Extracellular-facing. A helical membrane pass occupies residues Val201 to Val221. Residues Asp222–Thr229 are Cytoplasmic-facing. Residues Phe230–Phe250 form a helical membrane-spanning segment. The Extracellular segment spans residues Gly251–Lys270. The helical transmembrane segment at Ile271–Leu291 threads the bilayer. Residues Ile292 to Ser337 lie on the Cytoplasmic side of the membrane. A helical transmembrane segment spans residues Leu338 to Tyr358. The Extracellular segment spans residues Asp359–His366. Residues Phe367–Val387 form a helical membrane-spanning segment. The Cytoplasmic segment spans residues Arg388–Lys392. Residues Gly393 to Ile413 traverse the membrane as a helical segment. Residues Tyr414–Thr415 are Extracellular-facing. The helical transmembrane segment at Tyr416 to Tyr436 threads the bilayer. Residues Gln437–Lys450 are Cytoplasmic-facing. A helical membrane pass occupies residues Leu451–Gly471. Topologically, residues Thr472–Arg489 are extracellular. A helical membrane pass occupies residues Tyr490–Phe510. Over Asp511–Lys840 the chain is Cytoplasmic.

Belongs to the LPG synthase family.

The protein localises to the cell membrane. The catalysed reaction is L-lysyl-tRNA(Lys) + a 1,2-diacyl-sn-glycero-3-phospho-(1'-sn-glycerol) = a 1,2-diacyl-sn-glycero-3-phospho-1'-(3'-O-L-lysyl)-sn-glycerol + tRNA(Lys). Catalyzes the transfer of a lysyl group from L-lysyl-tRNA(Lys) to membrane-bound phosphatidylglycerol (PG), which produces lysylphosphatidylglycerol (LPG), a major component of the bacterial membrane with a positive net charge. LPG synthesis contributes to bacterial virulence as it is involved in the resistance mechanism against cationic antimicrobial peptides (CAMP) produces by the host's immune system (defensins, cathelicidins) and by the competing microorganisms (bacteriocins). In fact, the modification of anionic phosphatidylglycerol with positively charged L-lysine results in repulsion of the peptides. This chain is Phosphatidylglycerol lysyltransferase (mprF), found in Staphylococcus epidermidis (strain ATCC 35984 / DSM 28319 / BCRC 17069 / CCUG 31568 / BM 3577 / RP62A).